A 445-amino-acid polypeptide reads, in one-letter code: 3-phosphoshikimate 1-carboxyvinyltransferase (445 aa).

Over residues 1–20 (MSSTHPGRTIRSGATQNLSG) the composition is skewed to polar residues. The interval 1–24 (MSSTHPGRTIRSGATQNLSGTIRP) is disordered. 3 residues coordinate 3-phosphoshikimate: Lys28, Ser29, and Arg33. A phosphoenolpyruvate-binding site is contributed by Lys28. 2 residues coordinate phosphoenolpyruvate: Gly101 and Arg129. 3-phosphoshikimate contacts are provided by Ser174, Gln176, Asp322, and Lys349. Gln176 is a phosphoenolpyruvate binding site. The Proton acceptor role is filled by Asp322. Arg353 and Arg397 together coordinate phosphoenolpyruvate.

Belongs to the EPSP synthase family. In terms of assembly, monomer.

The protein resides in the cytoplasm. The enzyme catalyses 3-phosphoshikimate + phosphoenolpyruvate = 5-O-(1-carboxyvinyl)-3-phosphoshikimate + phosphate. Its pathway is metabolic intermediate biosynthesis; chorismate biosynthesis; chorismate from D-erythrose 4-phosphate and phosphoenolpyruvate: step 6/7. In terms of biological role, catalyzes the transfer of the enolpyruvyl moiety of phosphoenolpyruvate (PEP) to the 5-hydroxyl of shikimate-3-phosphate (S3P) to produce enolpyruvyl shikimate-3-phosphate and inorganic phosphate. The sequence is that of 3-phosphoshikimate 1-carboxyvinyltransferase from Magnetococcus marinus (strain ATCC BAA-1437 / JCM 17883 / MC-1).